The sequence spans 460 residues: Cysteine--tRNA ligase (460 aa).

Cys28 serves as a coordination point for Zn(2+). A 'HIGH' region motif is present at residues 30 to 40 (MTVYDYCHLGH). Residues Cys209, His234, and Glu238 each coordinate Zn(2+). Positions 266–270 (KMSKS) match the 'KMSKS' region motif. Lys269 contacts ATP.

The protein belongs to the class-I aminoacyl-tRNA synthetase family. Monomer. Requires Zn(2+) as cofactor.

Its subcellular location is the cytoplasm. The catalysed reaction is tRNA(Cys) + L-cysteine + ATP = L-cysteinyl-tRNA(Cys) + AMP + diphosphate. In Pseudomonas syringae pv. tomato (strain ATCC BAA-871 / DC3000), this protein is Cysteine--tRNA ligase.